Here is a 318-residue protein sequence, read N- to C-terminus: Protease HtpX homolog (318 aa).

The next 3 membrane-spanning stretches (helical) occupy residues 1-21 (MLEAAGAVLLGSAALLMVGRL), 35-55 (ILGLLVGILSLALAALTGSAI), and 56-76 (AGLVVGVITAAMMYLFSSRIV). Position 167 (His-167) interacts with Zn(2+). Glu-168 is a catalytic residue. His-171 contacts Zn(2+). The next 2 helical transmembrane spans lie at 178–198 (LVMTVAAAVSTAIAYAFDPWL) and 209–229 (IAFLVLAGMLASLISTLLVAA). Glu-235 is a binding site for Zn(2+).

It belongs to the peptidase M48B family. Requires Zn(2+) as cofactor.

The protein localises to the cell membrane. The protein is Protease HtpX homolog of Methanopyrus kandleri (strain AV19 / DSM 6324 / JCM 9639 / NBRC 100938).